The chain runs to 231 residues: Adenosine 5'-phosphosulfate reductase (231 aa).

Residues C118, C119, C201, and C204 each contribute to the [4Fe-4S] cluster site. The active-site Nucleophile; cysteine thiosulfonate intermediate is C227.

This sequence belongs to the PAPS reductase family. CysH subfamily. Requires [4Fe-4S] cluster as cofactor.

The protein resides in the cytoplasm. The catalysed reaction is [thioredoxin]-disulfide + sulfite + AMP + 2 H(+) = adenosine 5'-phosphosulfate + [thioredoxin]-dithiol. The protein operates within sulfur metabolism; hydrogen sulfide biosynthesis; sulfite from sulfate. Functionally, catalyzes the formation of sulfite from adenosine 5'-phosphosulfate (APS) using thioredoxin as an electron donor. The protein is Adenosine 5'-phosphosulfate reductase of Halalkalibacterium halodurans (strain ATCC BAA-125 / DSM 18197 / FERM 7344 / JCM 9153 / C-125) (Bacillus halodurans).